A 436-amino-acid chain; its full sequence is Glutamate-1-semialdehyde 2,1-aminomutase (436 aa).

Lys272 is modified (N6-(pyridoxal phosphate)lysine).

Belongs to the class-III pyridoxal-phosphate-dependent aminotransferase family. HemL subfamily. Homodimer. It depends on pyridoxal 5'-phosphate as a cofactor.

It localises to the cytoplasm. The enzyme catalyses (S)-4-amino-5-oxopentanoate = 5-aminolevulinate. It functions in the pathway porphyrin-containing compound metabolism; protoporphyrin-IX biosynthesis; 5-aminolevulinate from L-glutamyl-tRNA(Glu): step 2/2. The protein operates within porphyrin-containing compound metabolism; chlorophyll biosynthesis. The chain is Glutamate-1-semialdehyde 2,1-aminomutase from Methylibium petroleiphilum (strain ATCC BAA-1232 / LMG 22953 / PM1).